Here is a 441-residue protein sequence, read N- to C-terminus: ATP-dependent protease ATPase subunit HslU (441 aa).

Residues Ile-17, Gly-60–Glu-65, Asp-253, Glu-319, and Arg-391 each bind ATP.

The protein belongs to the ClpX chaperone family. HslU subfamily. A double ring-shaped homohexamer of HslV is capped on each side by a ring-shaped HslU homohexamer. The assembly of the HslU/HslV complex is dependent on binding of ATP.

Its subcellular location is the cytoplasm. Functionally, ATPase subunit of a proteasome-like degradation complex; this subunit has chaperone activity. The binding of ATP and its subsequent hydrolysis by HslU are essential for unfolding of protein substrates subsequently hydrolyzed by HslV. HslU recognizes the N-terminal part of its protein substrates and unfolds these before they are guided to HslV for hydrolysis. The polypeptide is ATP-dependent protease ATPase subunit HslU (Legionella pneumophila (strain Paris)).